Reading from the N-terminus, the 465-residue chain is Cysteine--tRNA ligase (465 aa).

Cysteine 27 serves as a coordination point for Zn(2+). Residues 29–39 (PTVYNFFHIGN) carry the 'HIGH' region motif. Positions 207, 232, and 236 each coordinate Zn(2+). The short motif at 264–268 (KMSKS) is the 'KMSKS' region element. Lysine 267 is a binding site for ATP.

It belongs to the class-I aminoacyl-tRNA synthetase family. In terms of assembly, monomer. Zn(2+) serves as cofactor.

The protein localises to the cytoplasm. The catalysed reaction is tRNA(Cys) + L-cysteine + ATP = L-cysteinyl-tRNA(Cys) + AMP + diphosphate. The protein is Cysteine--tRNA ligase of Clostridium botulinum (strain Loch Maree / Type A3).